The chain runs to 284 residues: 2-dehydro-3-deoxyphosphooctonate aldolase (284 aa).

It belongs to the KdsA family.

The protein resides in the cytoplasm. It catalyses the reaction D-arabinose 5-phosphate + phosphoenolpyruvate + H2O = 3-deoxy-alpha-D-manno-2-octulosonate-8-phosphate + phosphate. The protein operates within carbohydrate biosynthesis; 3-deoxy-D-manno-octulosonate biosynthesis; 3-deoxy-D-manno-octulosonate from D-ribulose 5-phosphate: step 2/3. It participates in bacterial outer membrane biogenesis; lipopolysaccharide biosynthesis. This chain is 2-dehydro-3-deoxyphosphooctonate aldolase, found in Proteus mirabilis (strain HI4320).